The sequence spans 339 residues: 4-hydroxy-2-oxovalerate aldolase (339 aa).

The 253-residue stretch at 7 to 259 (VILHDMSLRD…QSGIDLYKIM (253 aa)) folds into the Pyruvate carboxyltransferase domain. 15 to 16 (RD) provides a ligand contact to substrate. Aspartate 16 contributes to the Mn(2+) binding site. The Proton acceptor role is filled by histidine 19. Substrate-binding residues include serine 169 and histidine 198. The Mn(2+) site is built by histidine 198 and histidine 200. Tyrosine 289 is a binding site for substrate.

This sequence belongs to the 4-hydroxy-2-oxovalerate aldolase family.

It carries out the reaction (S)-4-hydroxy-2-oxopentanoate = acetaldehyde + pyruvate. This is 4-hydroxy-2-oxovalerate aldolase from Marinomonas sp. (strain MWYL1).